A 130-amino-acid polypeptide reads, in one-letter code: Small ribosomal subunit protein uS9 (130 aa).

A disordered region spans residues 108–130 (SREKERKKYGQRGARARFQYSKR).

This sequence belongs to the universal ribosomal protein uS9 family.

The protein is Small ribosomal subunit protein uS9 of Solidesulfovibrio magneticus (strain ATCC 700980 / DSM 13731 / RS-1) (Desulfovibrio magneticus).